A 103-amino-acid polypeptide reads, in one-letter code: Pyrimidine/purine nucleoside phosphorylase (103 aa).

It belongs to the nucleoside phosphorylase PpnP family.

The catalysed reaction is a purine D-ribonucleoside + phosphate = a purine nucleobase + alpha-D-ribose 1-phosphate. It catalyses the reaction adenosine + phosphate = alpha-D-ribose 1-phosphate + adenine. It carries out the reaction cytidine + phosphate = cytosine + alpha-D-ribose 1-phosphate. The enzyme catalyses guanosine + phosphate = alpha-D-ribose 1-phosphate + guanine. The catalysed reaction is inosine + phosphate = alpha-D-ribose 1-phosphate + hypoxanthine. It catalyses the reaction thymidine + phosphate = 2-deoxy-alpha-D-ribose 1-phosphate + thymine. It carries out the reaction uridine + phosphate = alpha-D-ribose 1-phosphate + uracil. The enzyme catalyses xanthosine + phosphate = alpha-D-ribose 1-phosphate + xanthine. Functionally, catalyzes the phosphorolysis of diverse nucleosides, yielding D-ribose 1-phosphate and the respective free bases. Can use uridine, adenosine, guanosine, cytidine, thymidine, inosine and xanthosine as substrates. Also catalyzes the reverse reactions. The sequence is that of Pyrimidine/purine nucleoside phosphorylase from Chlorobium chlorochromatii (strain CaD3).